A 396-amino-acid chain; its full sequence is Elongation factor Tu (396 aa).

The 196-residue stretch at K10–E205 folds into the tr-type G domain. Positions G19–T26 are G1. Residue G19–T26 participates in GTP binding. T26 lines the Mg(2+) pocket. The G2 stretch occupies residues G61–S65. Residues D82–G85 form a G3 region. GTP-binding positions include D82–H86 and N137–D140. Residues N137–D140 form a G4 region. Residues S175–L177 form a G5 region.

It belongs to the TRAFAC class translation factor GTPase superfamily. Classic translation factor GTPase family. EF-Tu/EF-1A subfamily. Monomer.

Its subcellular location is the cytoplasm. The catalysed reaction is GTP + H2O = GDP + phosphate + H(+). Functionally, GTP hydrolase that promotes the GTP-dependent binding of aminoacyl-tRNA to the A-site of ribosomes during protein biosynthesis. This is Elongation factor Tu from Halalkalibacterium halodurans (strain ATCC BAA-125 / DSM 18197 / FERM 7344 / JCM 9153 / C-125) (Bacillus halodurans).